The chain runs to 86 residues: Small ribosomal subunit protein bS20 (86 aa).

The segment at M1 to M27 is disordered.

It belongs to the bacterial ribosomal protein bS20 family.

In terms of biological role, binds directly to 16S ribosomal RNA. The sequence is that of Small ribosomal subunit protein bS20 from Vibrio vulnificus (strain CMCP6).